The chain runs to 30 residues: Non-toxic phospholipase A2 (30 aa).

Residues Y26, G28, and G30 each contribute to the Ca(2+) site.

It belongs to the phospholipase A2 family. Group I subfamily. As to quaternary structure, homodimer. Requires Ca(2+) as cofactor. Glycosylated. Expressed by the venom gland.

The protein localises to the secreted. The enzyme catalyses a 1,2-diacyl-sn-glycero-3-phosphocholine + H2O = a 1-acyl-sn-glycero-3-phosphocholine + a fatty acid + H(+). With respect to regulation, enzymatic activity is diminished by Cd(2+) and Hg(2+). In terms of biological role, relatively highly potent phospholipase A2 that displays potent antimicrobial and hemolytic activities. It does not show cytotoxic effects on the three human cell lines tested. PLA2 catalyzes the calcium-dependent hydrolysis of the 2-acyl groups in 3-sn-phosphoglycerides. It shows similar potencies on both Gram-negative and Gram-positive bacteria: B.cereus (MIC&gt;9 ug/ml), B.subtilis (MIC&gt;12 ug/ml), E.faecalis (MIC&gt;7 ug/ml), S.epidermidis (MIC&gt;12 ug/ml), S.aureux (MIC&gt;5 ug/ml), E.coli (MIC&gt;7 ug/ml), K.pneumonia (MIC&gt;8 ug/ml), P.aeruginosa (MIC&gt;10 ug/ml), and S.enteric (MIC&gt;9 ug/ml). It also shows antifungal activities: A.niger (MIC&gt;15 ug/ml), B.cinerea (MIC&gt;12 ug/ml), F.solani (MIC&gt;15 ug/ml), and P.digitatum (MIC&gt;10 ug/ml). The protein is Non-toxic phospholipase A2 of Walterinnesia aegyptia (Desert black snake).